The sequence spans 264 residues: 3-methyl-2-oxobutanoate hydroxymethyltransferase (264 aa).

The Mg(2+) site is built by Asp45 and Asp84. 3-methyl-2-oxobutanoate contacts are provided by residues 45 to 46 (DS), Asp84, and Lys112. Glu114 serves as a coordination point for Mg(2+). Glu181 acts as the Proton acceptor in catalysis.

Belongs to the PanB family. As to quaternary structure, homodecamer; pentamer of dimers. Requires Mg(2+) as cofactor.

It localises to the cytoplasm. The catalysed reaction is 3-methyl-2-oxobutanoate + (6R)-5,10-methylene-5,6,7,8-tetrahydrofolate + H2O = 2-dehydropantoate + (6S)-5,6,7,8-tetrahydrofolate. It functions in the pathway cofactor biosynthesis; (R)-pantothenate biosynthesis; (R)-pantoate from 3-methyl-2-oxobutanoate: step 1/2. Its function is as follows. Catalyzes the reversible reaction in which hydroxymethyl group from 5,10-methylenetetrahydrofolate is transferred onto alpha-ketoisovalerate to form ketopantoate. The sequence is that of 3-methyl-2-oxobutanoate hydroxymethyltransferase from Pectobacterium atrosepticum (strain SCRI 1043 / ATCC BAA-672) (Erwinia carotovora subsp. atroseptica).